Here is a 252-residue protein sequence, read N- to C-terminus: PF03932 family protein CutC (252 aa).

Belongs to the CutC family.

Its subcellular location is the cytoplasm. The polypeptide is PF03932 family protein CutC (Serratia proteamaculans (strain 568)).